Here is a 156-residue protein sequence, read N- to C-terminus: Probable cyclic pyranopterin monophosphate synthase (156 aa).

Substrate is bound by residues 73–75 (LCH) and 109–110 (ME). The active site involves Asp-124.

It belongs to the MoaC family. In terms of assembly, homohexamer; trimer of dimers.

It carries out the reaction (8S)-3',8-cyclo-7,8-dihydroguanosine 5'-triphosphate = cyclic pyranopterin phosphate + diphosphate. It participates in cofactor biosynthesis; molybdopterin biosynthesis. Its function is as follows. Catalyzes the conversion of (8S)-3',8-cyclo-7,8-dihydroguanosine 5'-triphosphate to cyclic pyranopterin monophosphate (cPMP). This Pyrococcus furiosus (strain ATCC 43587 / DSM 3638 / JCM 8422 / Vc1) protein is Probable cyclic pyranopterin monophosphate synthase.